The primary structure comprises 88 residues: Large ribosomal subunit protein eL34 (88 aa).

The disordered stretch occupies residues 41 to 72 (RPLNGIPRGRPNELRKLPKTKKRPERPMPNLC).

This sequence belongs to the eukaryotic ribosomal protein eL34 family.

The sequence is that of Large ribosomal subunit protein eL34 from Thermococcus sibiricus (strain DSM 12597 / MM 739).